A 642-amino-acid polypeptide reads, in one-letter code: Mini-chromosome maintenance complex-binding protein (642 aa).

The segment covering 151–161 has biased composition (polar residues); it reads ARVSPSTSYTP. The interval 151-197 is disordered; that stretch reads ARVSPSTSYTPSRHKRSYEDDDDMDLQPNKQKDQHAGARQAGSVGGL. Position 154 is a phosphoserine (Ser154). Thr160 carries the phosphothreonine modification. A phosphoserine mark is found at Ser167 and Ser298.

The protein belongs to the MCMBP family. As to quaternary structure, interacts with the MCM complex: associates with the MCM3-7 complex which lacks MCM2, while it does not interact with the MCM complex when MCM2 is present (MCM2-7 complex). Interacts with the RPA complex, when composed of all RPA1, RPA2 and RPA3 components, but not with RPA1 or RPA2 alone.

The protein resides in the nucleus. Its function is as follows. Associated component of the MCM complex that acts as a regulator of DNA replication. Binds to the MCM complex during late S phase and promotes the disassembly of the MCM complex from chromatin, thereby acting as a key regulator of pre-replication complex (pre-RC) unloading from replicated DNA. Can dissociate the MCM complex without addition of ATP; probably acts by destabilizing interactions of each individual subunits of the MCM complex. Required for sister chromatid cohesion. The polypeptide is Mini-chromosome maintenance complex-binding protein (MCMBP) (Homo sapiens (Human)).